Reading from the N-terminus, the 335-residue chain is Biotin synthase (335 aa).

Residues 47-276 enclose the Radical SAM core domain; the sequence is FYGKKVKLNM…SKEIRISGGR (230 aa). 3 residues coordinate [4Fe-4S] cluster: Cys65, Cys69, and Cys72. Residues Cys109, Cys141, Cys201, and Arg271 each contribute to the [2Fe-2S] cluster site.

This sequence belongs to the radical SAM superfamily. Biotin synthase family. Homodimer. It depends on [4Fe-4S] cluster as a cofactor. Requires [2Fe-2S] cluster as cofactor.

It catalyses the reaction (4R,5S)-dethiobiotin + (sulfur carrier)-SH + 2 reduced [2Fe-2S]-[ferredoxin] + 2 S-adenosyl-L-methionine = (sulfur carrier)-H + biotin + 2 5'-deoxyadenosine + 2 L-methionine + 2 oxidized [2Fe-2S]-[ferredoxin]. It functions in the pathway cofactor biosynthesis; biotin biosynthesis; biotin from 7,8-diaminononanoate: step 2/2. Its function is as follows. Catalyzes the conversion of dethiobiotin (DTB) to biotin by the insertion of a sulfur atom into dethiobiotin via a radical-based mechanism. The polypeptide is Biotin synthase (Bacillus subtilis subsp. natto).